The primary structure comprises 947 residues: Vacuolar membrane protease (947 aa).

Topologically, residues Met-1–Lys-15 are cytoplasmic. The helical transmembrane segment at Thr-16–Asp-36 threads the bilayer. The Vacuolar portion of the chain corresponds to Arg-37–Lys-358. N-linked (GlcNAc...) asparagine glycosylation is found at Asn-46, Asn-92, Asn-108, and Asn-121. Zn(2+) contacts are provided by His-156 and Asp-168. Glu-200 acts as the Proton acceptor in catalysis. Positions 201, 226, and 300 each coordinate Zn(2+). A glycan (N-linked (GlcNAc...) asparagine) is linked at Asn-319. The chain crosses the membrane as a helical span at residues His-359–Ala-379. At His-380–Arg-391 the chain is on the cytoplasmic side. A helical transmembrane segment spans residues Leu-392–Thr-412. The Vacuolar segment spans residues Lys-413–Arg-428. The chain crosses the membrane as a helical span at residues Thr-429 to Ala-449. The Cytoplasmic segment spans residues Glu-450–Tyr-458. Residues Lys-459 to Leu-479 traverse the membrane as a helical segment. The Vacuolar portion of the chain corresponds to Arg-480–Thr-489. A helical membrane pass occupies residues Gly-490–Phe-510. At Gly-511–Tyr-601 the chain is on the cytoplasmic side. Polar residues-rich tracts occupy residues Asn-522 to Gln-531 and Asn-546 to His-567. Positions Asn-522 to Val-573 are disordered. The helical transmembrane segment at Asn-602–Leu-622 threads the bilayer. Residues Asp-623–Gln-641 are Vacuolar-facing. The helical transmembrane segment at Leu-642–Ile-662 threads the bilayer. At Ser-663 to Ser-669 the chain is on the cytoplasmic side. A helical membrane pass occupies residues Ser-670–Phe-690. The Vacuolar portion of the chain corresponds to Ser-691–Leu-947. N-linked (GlcNAc...) asparagine glycosylation is found at Asn-742, Asn-784, Asn-801, and Asn-833.

It belongs to the peptidase M28 family. Zn(2+) serves as cofactor.

The protein localises to the vacuole membrane. In terms of biological role, may be involved in vacuolar sorting and osmoregulation. In Candida glabrata (strain ATCC 2001 / BCRC 20586 / JCM 3761 / NBRC 0622 / NRRL Y-65 / CBS 138) (Yeast), this protein is Vacuolar membrane protease.